Here is a 512-residue protein sequence, read N- to C-terminus: ATP synthase subunit alpha (512 aa).

169–176 (GDRQTGKT) is an ATP binding site.

It belongs to the ATPase alpha/beta chains family. As to quaternary structure, F-type ATPases have 2 components, CF(1) - the catalytic core - and CF(0) - the membrane proton channel. CF(1) has five subunits: alpha(3), beta(3), gamma(1), delta(1), epsilon(1). CF(0) has four main subunits: a(1), b(1), b'(1) and c(9-12).

The protein resides in the cell inner membrane. The enzyme catalyses ATP + H2O + 4 H(+)(in) = ADP + phosphate + 5 H(+)(out). Produces ATP from ADP in the presence of a proton gradient across the membrane. The alpha chain is a regulatory subunit. This is ATP synthase subunit alpha from Jannaschia sp. (strain CCS1).